A 428-amino-acid polypeptide reads, in one-letter code: 3-phosphoshikimate 1-carboxyvinyltransferase (428 aa).

Residues Lys22, Ser23, and Arg27 each coordinate 3-phosphoshikimate. Lys22 serves as a coordination point for phosphoenolpyruvate. Positions 96 and 124 each coordinate phosphoenolpyruvate. Residues Ser170, Ser171, Gln172, Ser198, Asp314, Asn337, and Lys341 each contribute to the 3-phosphoshikimate site. Phosphoenolpyruvate is bound at residue Gln172. The Proton acceptor role is filled by Asp314. Positions 345, 387, and 412 each coordinate phosphoenolpyruvate.

This sequence belongs to the EPSP synthase family. As to quaternary structure, monomer.

The protein resides in the cytoplasm. The catalysed reaction is 3-phosphoshikimate + phosphoenolpyruvate = 5-O-(1-carboxyvinyl)-3-phosphoshikimate + phosphate. Its pathway is metabolic intermediate biosynthesis; chorismate biosynthesis; chorismate from D-erythrose 4-phosphate and phosphoenolpyruvate: step 6/7. Catalyzes the transfer of the enolpyruvyl moiety of phosphoenolpyruvate (PEP) to the 5-hydroxyl of shikimate-3-phosphate (S3P) to produce enolpyruvyl shikimate-3-phosphate and inorganic phosphate. This chain is 3-phosphoshikimate 1-carboxyvinyltransferase, found in Vibrio vulnificus (strain YJ016).